The chain runs to 90 residues: Envelope glycoprotein N (90 aa).

The first 21 residues, 1–21 (MTWKLFICFLSFGVIFLRVSS), serve as a signal peptide directing secretion. At 22 to 55 (LTEKSHTTSYTILHNNNFYSNSCSADTYVPSIKT) the chain is on the virion surface side. The chain crosses the membrane as a helical span at residues 56 to 76 (FSSVWAILNVIIFFCASLFYL). Over 77–90 (RHLCIVKFISNLTK) the chain is Intravirion.

This sequence belongs to the herpesviridae glycoprotein N family. As to quaternary structure, interacts (via N-terminus) with gM (via N-terminus). The gM-gN heterodimer forms the gCII complex.

The protein localises to the virion membrane. The protein resides in the host membrane. It localises to the host Golgi apparatus. Its subcellular location is the host trans-Golgi network. Envelope glycoprotein necessary for proper maturation of gM and modulation of its membrane fusion activity. Also plays a critical role in virion morphogenesis. This Saimiriine herpesvirus 2 (strain 11) (SaHV-2) protein is Envelope glycoprotein N.